We begin with the raw amino-acid sequence, 33 residues long: Cecropin-C (33 aa).

Lys-21 carries the post-translational modification 5-hydroxylysine.

As to quaternary structure, monomer. Hemolymph.

It localises to the secreted. In terms of biological role, cecropins have lytic and antibacterial activity against several Gram-positive and Gram-negative bacteria. Also has activity against fungi. This Heliothis virescens (Tobacco budworm moth) protein is Cecropin-C.